A 96-amino-acid polypeptide reads, in one-letter code: UPF0235 protein YggU (96 aa).

Belongs to the UPF0235 family.

The polypeptide is UPF0235 protein YggU (Salmonella agona (strain SL483)).